The sequence spans 66 residues: Beta-mammal toxin Css2 (66 aa).

Residues 1-66 form the LCN-type CS-alpha/beta domain; sequence KEGYLVSKST…VWPLPNKTCN (66 aa). Cystine bridges form between Cys-12–Cys-65, Cys-16–Cys-41, Cys-25–Cys-46, and Cys-29–Cys-48. Asn-66 bears the Asparagine amide mark.

Belongs to the long (4 C-C) scorpion toxin superfamily. Sodium channel inhibitor family. Beta subfamily. In terms of processing, C-terminal amidation increases its affinity for sodium channels. In terms of tissue distribution, expressed by the venom gland.

The protein resides in the secreted. Its function is as follows. Beta toxin that binds site-4 of sodium channels (Nav) and reduces peak current (observed on Nav1.6/SCN8A (IC(50)=307 nM)), shifts the voltage of activation toward more negative potentials (observed on Nav1.6, Nav1.1 (weak), Nav1.2 (weak), and Nav1.7 (weak)), and induces resurgent currents at negative voltages following brief and strong depolarizations (observed on Nav1.6, Nav1.1 (weak), and Nav1.7 (weak)). A reduction of peak current of Nav1.5/SCN7A has been observed in another study (IC(50)=35-40 nM). This toxin is only active on mammals. It has been shown to bind phospholipids. This Centruroides suffusus (Durango bark scorpion) protein is Beta-mammal toxin Css2.